Consider the following 292-residue polypeptide: N-acetylneuraminate lyase (292 aa).

The aceneuramate site is built by Ser-47 and Thr-48. Tyr-136 serves as the catalytic Proton donor. The Schiff-base intermediate with substrate role is filled by Lys-164. Residues Thr-166, Gly-188, Asp-190, Glu-191, and Ser-207 each contribute to the aceneuramate site.

The protein belongs to the DapA family. NanA subfamily. In terms of assembly, homotetramer.

The protein resides in the cytoplasm. It catalyses the reaction aceneuramate = aldehydo-N-acetyl-D-mannosamine + pyruvate. Its pathway is amino-sugar metabolism; N-acetylneuraminate degradation; D-fructose 6-phosphate from N-acetylneuraminate: step 1/5. In terms of biological role, catalyzes the reversible aldol cleavage of N-acetylneuraminic acid (sialic acid; Neu5Ac) to form pyruvate and N-acetylmannosamine (ManNAc) via a Schiff base intermediate. This Actinobacillus pleuropneumoniae serotype 5b (strain L20) protein is N-acetylneuraminate lyase.